The primary structure comprises 499 residues: Gypsy retrotransposon integrase-like protein 1 (499 aa).

An Integrase catalytic domain is found at 113 to 270 (KVENPWSIVT…TPYFQMFNRN (158 aa)).

The chain is Gypsy retrotransposon integrase-like protein 1 (GIN1) from Bos taurus (Bovine).